A 277-amino-acid polypeptide reads, in one-letter code: Multiple sugar-binding transport system permease protein MsmG (277 aa).

Helical transmembrane passes span 13–33, 74–94, 110–130, 141–161, 198–218, and 243–263; these read YVLL…TVFS, VITV…AYSI, LLIL…TVMM, LIIL…VGYI, TTLI…LLIL, and GPSF…YLIF. Residues 69–263 form the ABC transmembrane type-1 domain; it reads FWNSTVITVL…ITITIVYLIF (195 aa).

This sequence belongs to the binding-protein-dependent transport system permease family. MalFG subfamily.

The protein resides in the cell membrane. Its function is as follows. Involved in a binding protein-dependent transport system responsible for the uptake of melibiose, raffinose and isomaltotriose. The polypeptide is Multiple sugar-binding transport system permease protein MsmG (msmG) (Streptococcus mutans serotype c (strain ATCC 700610 / UA159)).